The primary structure comprises 1008 residues: Ubiquitin carboxyl-terminal hydrolase 16 (1008 aa).

The chain crosses the membrane as a helical span at residues 7-27 (LGISSLVLVVSLVLPLIGLFV). The Zn(2+) site is built by Cys74, Cys77, Cys85, Cys88, Cys94, Cys98, His107, and Cys111. The segment at 74-111 (CPVCYCLATTRCSRCKAVRYCSGKCQIIHWRQGHKDEC) adopts an MYND-type zinc-finger fold. Disordered regions lie at residues 122-149 (DESD…GPEP), 159-178 (LSNR…DNKD), 187-233 (VSVA…LDAH), 275-309 (SVHK…DPSL), and 326-379 (SDSC…YISD). Residues 193–203 (SGSSFSGFSSS) show a composition bias toward low complexity. Residues 222–233 (ESERSESLLDAH) show a composition bias toward basic and acidic residues. A compositionally biased stretch (polar residues) spans 284-295 (GQNQSQSRSLHS). The span at 340–351 (SSLHFSFGSGSS) shows a compositional bias: low complexity. The USP domain maps to 542–847 (CGLINVGNSC…GAYMLFYARC (306 aa)). Residue Cys551 is the Nucleophile of the active site. His807 functions as the Proton acceptor in the catalytic mechanism. Disordered regions lie at residues 859 to 905 (KTEA…GNIQ) and 952 to 1008 (FIFG…GGER). 2 stretches are compositionally biased toward low complexity: residues 878–888 (STISRSVSTSS) and 965–992 (SETP…RSSP).

The protein belongs to the peptidase C19 family. Interacts with SHM1 and SHM4. Interacts with HIPP27. As to expression, expressed in flowers, siliques, rosette leaves, cauline leaves, stems and at a lower level in roots. In roots, expressed in the sieve elements.

The protein resides in the membrane. It carries out the reaction Thiol-dependent hydrolysis of ester, thioester, amide, peptide and isopeptide bonds formed by the C-terminal Gly of ubiquitin (a 76-residue protein attached to proteins as an intracellular targeting signal).. Recognizes and hydrolyzes the peptide bond at the C-terminal Gly of ubiquitin. Involved in the processing of poly-ubiquitin precursors as well as that of ubiquitinated proteins. Involved in salt tolerance by modulating sodium transport activity and repressing cell death at least partially through modulating SHM1 stability and activity. Involved in cadmium tolerance by interacting with HIPP27 and probably modulating its stability. This Arabidopsis thaliana (Mouse-ear cress) protein is Ubiquitin carboxyl-terminal hydrolase 16 (UBP16).